We begin with the raw amino-acid sequence, 441 residues long: Glutamate-1-semialdehyde 2,1-aminomutase (441 aa).

Lys275 is modified (N6-(pyridoxal phosphate)lysine).

The protein belongs to the class-III pyridoxal-phosphate-dependent aminotransferase family. HemL subfamily. Homodimer. The cofactor is pyridoxal 5'-phosphate.

It is found in the cytoplasm. It catalyses the reaction (S)-4-amino-5-oxopentanoate = 5-aminolevulinate. It participates in porphyrin-containing compound metabolism; protoporphyrin-IX biosynthesis; 5-aminolevulinate from L-glutamyl-tRNA(Glu): step 2/2. This Deinococcus deserti (strain DSM 17065 / CIP 109153 / LMG 22923 / VCD115) protein is Glutamate-1-semialdehyde 2,1-aminomutase.